Reading from the N-terminus, the 308-residue chain is Probable plastid-lipid-associated protein 9, chloroplastic (308 aa).

Residues 1-55 constitute a chloroplast transit peptide; it reads MALIQHGSVSGTSAVRLSFSSSVSPPSSSPPLSRVSLNFQSEKKSCYRRMICRAM.

This sequence belongs to the PAP/fibrillin family.

Its subcellular location is the plastid. The protein localises to the chloroplast. It localises to the plastoglobule. The protein is Probable plastid-lipid-associated protein 9, chloroplastic (PAP9) of Arabidopsis thaliana (Mouse-ear cress).